Reading from the N-terminus, the 228-residue chain is MTARRAPAVNRDVLEGMLVEGTAALDLTLTDTQRNQLLDYVALLGKWNAVYNLTAIRDPMQMLIQHILDSLSIVPHLRGRTSARVLDVGSGGGLPGIVLAIVEPGWQVTLNDIVQKKSAFQTQMRAELKLANLSVVTGRVESLQPGVEVPEKFDMIVSRAFADLSDFVKLARHLVAPGGSIWAMKGVHPDDEIARLPEGSRVTQTIRLAVPMLDAERHLFEVAVDDAN.

Residues G89, L94, 140–141, and R159 contribute to the S-adenosyl-L-methionine site; that span reads VE.

This sequence belongs to the methyltransferase superfamily. RNA methyltransferase RsmG family.

It is found in the cytoplasm. The catalysed reaction is guanosine(527) in 16S rRNA + S-adenosyl-L-methionine = N(7)-methylguanosine(527) in 16S rRNA + S-adenosyl-L-homocysteine. Specifically methylates the N7 position of guanine in position 527 of 16S rRNA. This Burkholderia cenocepacia (strain HI2424) protein is Ribosomal RNA small subunit methyltransferase G.